A 135-amino-acid chain; its full sequence is Interleukin-4 (135 aa).

Residues 1–24 (MGLTYQLIPVLVCLLVCTSHLVHG) form the signal peptide. 3 disulfide bridges follow: Cys-27–Cys-135, Cys-48–Cys-85, and Cys-70–Cys-105. Asn-62 carries N-linked (GlcNAc...) asparagine glycosylation.

The protein belongs to the IL-4/IL-13 family.

It is found in the secreted. Its function is as follows. Participates in at least several B-cell activation processes as well as of other cell types. It is a costimulator of DNA-synthesis. It induces the expression of class II MHC molecules on resting B-cells. It enhances both secretion and cell surface expression of IgE and IgG1. It also regulates the expression of the low affinity Fc receptor for IgE (CD23) on both lymphocytes and monocytes. Positively regulates IL31RA expression in macrophages. Stimulates autophagy in dendritic cells by interfering with mTORC1 signaling and through the induction of RUFY4. This chain is Interleukin-4 (IL4), found in Bubalus bubalis (Domestic water buffalo).